We begin with the raw amino-acid sequence, 619 residues long: DNA mismatch repair protein MutL (619 aa).

The protein belongs to the DNA mismatch repair MutL/HexB family.

Functionally, this protein is involved in the repair of mismatches in DNA. It is required for dam-dependent methyl-directed DNA mismatch repair. May act as a 'molecular matchmaker', a protein that promotes the formation of a stable complex between two or more DNA-binding proteins in an ATP-dependent manner without itself being part of a final effector complex. The sequence is that of DNA mismatch repair protein MutL from Myxococcus xanthus (strain DK1622).